Consider the following 391-residue polypeptide: Coiled-coil domain-containing protein 85C (391 aa).

2 coiled-coil regions span residues 19-86 (EELL…RELC) and 116-146 (KEVGVYQQKLKELEAKQESLIRDNLELKEII). Disordered regions lie at residues 155–238 (GAGS…LNDS) and 278–303 (PYHSESQLSPLPQYQEPLQNGSTRVT). The segment covering 157-175 (GSRSSIDSQNSLTNLNGSS) has biased composition (polar residues). Positions 182 to 194 (DGSSTSSTGSAGS) are enriched in low complexity. Residues 280–303 (HSESQLSPLPQYQEPLQNGSTRVT) show a composition bias toward polar residues.

This sequence belongs to the CCDC85 family.

The protein resides in the cell junction. It is found in the tight junction. Its subcellular location is the adherens junction. Functionally, may play a role in cell-cell adhesion and epithelium development through its interaction with proteins of the beta-catenin family. May play an important role in cortical development, especially in the maintenance of radial glia. The chain is Coiled-coil domain-containing protein 85C (ccdc85c) from Xenopus tropicalis (Western clawed frog).